The following is a 164-amino-acid chain: Transcription elongation factor GreA (164 aa).

Belongs to the GreA/GreB family.

Necessary for efficient RNA polymerase transcription elongation past template-encoded arresting sites. The arresting sites in DNA have the property of trapping a certain fraction of elongating RNA polymerases that pass through, resulting in locked ternary complexes. Cleavage of the nascent transcript by cleavage factors such as GreA or GreB allows the resumption of elongation from the new 3'terminus. GreA releases sequences of 2 to 3 nucleotides. The protein is Transcription elongation factor GreA of Helicobacter pylori (strain P12).